The following is a 283-amino-acid chain: Bifunctional protein FolD (283 aa).

Residues 165–167 (GAS) and Ser-190 contribute to the NADP(+) site.

The protein belongs to the tetrahydrofolate dehydrogenase/cyclohydrolase family. As to quaternary structure, homodimer.

The catalysed reaction is (6R)-5,10-methylene-5,6,7,8-tetrahydrofolate + NADP(+) = (6R)-5,10-methenyltetrahydrofolate + NADPH. It catalyses the reaction (6R)-5,10-methenyltetrahydrofolate + H2O = (6R)-10-formyltetrahydrofolate + H(+). Its pathway is one-carbon metabolism; tetrahydrofolate interconversion. Catalyzes the oxidation of 5,10-methylenetetrahydrofolate to 5,10-methenyltetrahydrofolate and then the hydrolysis of 5,10-methenyltetrahydrofolate to 10-formyltetrahydrofolate. The chain is Bifunctional protein FolD from Cupriavidus necator (strain ATCC 17699 / DSM 428 / KCTC 22496 / NCIMB 10442 / H16 / Stanier 337) (Ralstonia eutropha).